Reading from the N-terminus, the 323-residue chain is Fructose-1,6-bisphosphatase class 1 (323 aa).

Mg(2+)-binding residues include E93, D114, L116, and D117. Residues 117 to 120, N205, Y233, and K263 each bind substrate; that span reads DGSS. A Mg(2+)-binding site is contributed by E269.

This sequence belongs to the FBPase class 1 family. In terms of assembly, homotetramer. Mg(2+) serves as cofactor.

It localises to the cytoplasm. The catalysed reaction is beta-D-fructose 1,6-bisphosphate + H2O = beta-D-fructose 6-phosphate + phosphate. Its pathway is carbohydrate biosynthesis; gluconeogenesis. The sequence is that of Fructose-1,6-bisphosphatase class 1 from Sulfurihydrogenibium sp. (strain YO3AOP1).